The sequence spans 287 residues: Ribonuclease Z (287 aa).

7 residues coordinate Zn(2+): His-64, His-66, Asp-68, His-69, His-124, Asp-191, and His-250. Asp-68 acts as the Proton acceptor in catalysis.

It belongs to the RNase Z family. In terms of assembly, homodimer. Zn(2+) is required as a cofactor.

The catalysed reaction is Endonucleolytic cleavage of RNA, removing extra 3' nucleotides from tRNA precursor, generating 3' termini of tRNAs. A 3'-hydroxy group is left at the tRNA terminus and a 5'-phosphoryl group is left at the trailer molecule.. In terms of biological role, zinc phosphodiesterase, which displays some tRNA 3'-processing endonuclease activity. Probably involved in tRNA maturation, by removing a 3'-trailer from precursor tRNA. The chain is Ribonuclease Z from Pyrobaculum islandicum (strain DSM 4184 / JCM 9189 / GEO3).